Consider the following 347-residue polypeptide: GMP reductase (347 aa).

NADP(+) is bound at residue 108-131; it reads ADFEKTKQILDLNPALNFVCIDVA. K(+)-binding residues include Gly181 and Gly183. Residue Cys186 is the Thioimidate intermediate of the active site. 216–239 serves as a coordination point for NADP(+); that stretch reads IISDGGCTTPGDVAKAFGGGADFV.

Belongs to the IMPDH/GMPR family. GuaC type 1 subfamily. In terms of assembly, homotetramer.

The enzyme catalyses IMP + NH4(+) + NADP(+) = GMP + NADPH + 2 H(+). In terms of biological role, catalyzes the irreversible NADPH-dependent deamination of GMP to IMP. It functions in the conversion of nucleobase, nucleoside and nucleotide derivatives of G to A nucleotides, and in maintaining the intracellular balance of A and G nucleotides. The chain is GMP reductase from Escherichia coli O157:H7.